The primary structure comprises 220 residues: Zinc finger protein 36 (220 aa).

A C2H2-type 1 zinc finger spans residues 73–95; that stretch reads FRCTVCGKAFASYQALGGHKSSH. The disordered stretch occupies residues 90–134; that stretch reads GHKSSHRKPPSPGDHYGAAAAAQQLASAGDSKEDSASSAAGSTGP. Low complexity predominate over residues 107–117; it reads AAAAAQQLASA. Residues 135–157 form a C2H2-type 2 zinc finger; the sequence is HRCTICRRSFATGQALGGHKRCH.

Probable transcription factor involved in abscisic acid (ABA) signaling. Required for the regulation of the cross-talk between NADPH oxidase, hydrogen peroxide and MAP kinase in ABA signaling. Regulates the expression of the NADPH oxidase genes RBOHB and RBOHE, and the MAPK genes MPK1, MPK4, MPK5, MPK7 and MPK14. Regulates ABA-induced hydrogen peroxide production and antioxidant defense. Required for tolerance to water stress and oxidative stress. This chain is Zinc finger protein 36, found in Oryza sativa subsp. japonica (Rice).